The following is a 373-amino-acid chain: Probable tRNA sulfurtransferase (373 aa).

Positions 54–158 constitute a THUMP domain; the sequence is NKNIEELSKV…NDVAYFYYKI (105 aa). Residues 176-177, 201-202, K256, G278, and Q287 contribute to the ATP site; these read LF and NF.

The protein belongs to the ThiI family.

It is found in the cytoplasm. It catalyses the reaction [ThiI sulfur-carrier protein]-S-sulfanyl-L-cysteine + a uridine in tRNA + 2 reduced [2Fe-2S]-[ferredoxin] + ATP + H(+) = [ThiI sulfur-carrier protein]-L-cysteine + a 4-thiouridine in tRNA + 2 oxidized [2Fe-2S]-[ferredoxin] + AMP + diphosphate. The catalysed reaction is [ThiS sulfur-carrier protein]-C-terminal Gly-Gly-AMP + S-sulfanyl-L-cysteinyl-[cysteine desulfurase] + AH2 = [ThiS sulfur-carrier protein]-C-terminal-Gly-aminoethanethioate + L-cysteinyl-[cysteine desulfurase] + A + AMP + 2 H(+). Its pathway is cofactor biosynthesis; thiamine diphosphate biosynthesis. Catalyzes the ATP-dependent transfer of a sulfur to tRNA to produce 4-thiouridine in position 8 of tRNAs, which functions as a near-UV photosensor. Also catalyzes the transfer of sulfur to the sulfur carrier protein ThiS, forming ThiS-thiocarboxylate. This is a step in the synthesis of thiazole, in the thiamine biosynthesis pathway. The sulfur is donated as persulfide by IscS. This is Probable tRNA sulfurtransferase from Saccharolobus islandicus (strain L.S.2.15 / Lassen #1) (Sulfolobus islandicus).